A 288-amino-acid chain; its full sequence is Acetyl-coenzyme A carboxylase carboxyl transferase subunit beta (288 aa).

The CoA carboxyltransferase N-terminal domain occupies 30–288 (IMTKCPKCKK…KLHQEVKKDA (259 aa)). Zn(2+) contacts are provided by cysteine 34, cysteine 37, cysteine 53, and cysteine 56. A C4-type zinc finger spans residues 34–56 (CPKCKKIMYTKELNENLNVCFNC).

Belongs to the AccD/PCCB family. Acetyl-CoA carboxylase is a heterohexamer composed of biotin carboxyl carrier protein (AccB), biotin carboxylase (AccC) and two subunits each of ACCase subunit alpha (AccA) and ACCase subunit beta (AccD). It depends on Zn(2+) as a cofactor.

It is found in the cytoplasm. The enzyme catalyses N(6)-carboxybiotinyl-L-lysyl-[protein] + acetyl-CoA = N(6)-biotinyl-L-lysyl-[protein] + malonyl-CoA. It participates in lipid metabolism; malonyl-CoA biosynthesis; malonyl-CoA from acetyl-CoA: step 1/1. Its function is as follows. Component of the acetyl coenzyme A carboxylase (ACC) complex. Biotin carboxylase (BC) catalyzes the carboxylation of biotin on its carrier protein (BCCP) and then the CO(2) group is transferred by the transcarboxylase to acetyl-CoA to form malonyl-CoA. The protein is Acetyl-coenzyme A carboxylase carboxyl transferase subunit beta of Staphylococcus haemolyticus (strain JCSC1435).